The following is a 353-amino-acid chain: Casein kinase II subunit alpha (353 aa).

Positions Y39–F324 constitute a Protein kinase domain. ATP-binding positions include L45–V53 and K68. The active-site Proton acceptor is D156. Residues M334–E353 are disordered.

The protein belongs to the protein kinase superfamily. Ser/Thr protein kinase family. CK2 subfamily. As to quaternary structure, tetramer of two alpha and two beta chains.

It catalyses the reaction L-seryl-[protein] + ATP = O-phospho-L-seryl-[protein] + ADP + H(+). The enzyme catalyses L-threonyl-[protein] + ATP = O-phospho-L-threonyl-[protein] + ADP + H(+). Functionally, casein kinases are operationally defined by their preferential utilization of acidic proteins such as caseins as substrates. The alpha chain contains the catalytic site. May participate in Wnt signaling. This chain is Casein kinase II subunit alpha, found in Spodoptera frugiperda (Fall armyworm).